Consider the following 244-residue polypeptide: Lymphotoxin-beta (244 aa).

Residues 1–18 (MGALGLEGRGGRLQGRGS) lie on the Cytoplasmic side of the membrane. The chain crosses the membrane as a helical; Signal-anchor for type II membrane protein span at residues 19 to 48 (LLLAVAGATSLVTLLLAVPITVLAVLALVP). Residues 49–244 (QDQGGLVTET…KTFFGAVMVG (196 aa)) are Extracellular-facing. Positions 88–243 (PAAHLIGAPL…GKTFFGAVMV (156 aa)) constitute a THD domain. The N-linked (GlcNAc...) asparagine glycan is linked to Asn222.

This sequence belongs to the tumor necrosis factor family. In terms of assembly, heterotrimer of either two LTB and one LTA subunits or (less prevalent) one LTB and two LTA subunits. In terms of tissue distribution, spleen and thymus.

It is found in the membrane. Cytokine that binds to LTBR/TNFRSF3. May play a specific role in immune response regulation. Provides the membrane anchor for the attachment of the heterotrimeric complex to the cell surface. Isoform 2 is probably non-functional. In Homo sapiens (Human), this protein is Lymphotoxin-beta (LTB).